The sequence spans 338 residues: Fructose-1,6-bisphosphatase class 1 (338 aa).

4 residues coordinate Mg(2+): Glu-91, Asp-113, Leu-115, and Asp-116. Residues 116–119, Asn-208, and Lys-274 contribute to the substrate site; that span reads DGSS. Glu-280 serves as a coordination point for Mg(2+).

This sequence belongs to the FBPase class 1 family. In terms of assembly, homotetramer. The cofactor is Mg(2+).

It localises to the cytoplasm. The enzyme catalyses beta-D-fructose 1,6-bisphosphate + H2O = beta-D-fructose 6-phosphate + phosphate. It participates in carbohydrate biosynthesis; gluconeogenesis. The chain is Fructose-1,6-bisphosphatase class 1 from Ralstonia nicotianae (strain ATCC BAA-1114 / GMI1000) (Ralstonia solanacearum).